A 109-amino-acid polypeptide reads, in one-letter code: Ribonuclease P protein component (109 aa).

Belongs to the RnpA family. As to quaternary structure, consists of a catalytic RNA component (M1 or rnpB) and a protein subunit.

The catalysed reaction is Endonucleolytic cleavage of RNA, removing 5'-extranucleotides from tRNA precursor.. In terms of biological role, RNaseP catalyzes the removal of the 5'-leader sequence from pre-tRNA to produce the mature 5'-terminus. It can also cleave other RNA substrates such as 4.5S RNA. The protein component plays an auxiliary but essential role in vivo by binding to the 5'-leader sequence and broadening the substrate specificity of the ribozyme. The polypeptide is Ribonuclease P protein component (Streptococcus agalactiae serotype Ia (strain ATCC 27591 / A909 / CDC SS700)).